Reading from the N-terminus, the 439-residue chain is ATP-dependent protease ATPase subunit HslU (439 aa).

Residues I17, 59 to 64, D251, E317, and R389 contribute to the ATP site; that span reads GVGKTE.

Belongs to the ClpX chaperone family. HslU subfamily. A double ring-shaped homohexamer of HslV is capped on each side by a ring-shaped HslU homohexamer. The assembly of the HslU/HslV complex is dependent on binding of ATP.

It is found in the cytoplasm. ATPase subunit of a proteasome-like degradation complex; this subunit has chaperone activity. The binding of ATP and its subsequent hydrolysis by HslU are essential for unfolding of protein substrates subsequently hydrolyzed by HslV. HslU recognizes the N-terminal part of its protein substrates and unfolds these before they are guided to HslV for hydrolysis. This chain is ATP-dependent protease ATPase subunit HslU, found in Campylobacter jejuni subsp. jejuni serotype O:23/36 (strain 81-176).